A 489-amino-acid polypeptide reads, in one-letter code: Cytochrome P450 monooxygenase trt6 (489 aa).

The chain crosses the membrane as a helical span at residues 10 to 30; sequence SLWSFGLWILVILSPVLFFAS. 2 N-linked (GlcNAc...) asparagine glycosylation sites follow: N364 and N407. C430 is a binding site for heme.

Belongs to the cytochrome P450 family. It depends on heme as a cofactor.

Its subcellular location is the membrane. The protein operates within secondary metabolite biosynthesis; terpenoid biosynthesis. Cytochrome P450 monooxygenase; part of the gene cluster that mediates the biosynthesis of terretonin, a fungal meroterpenoid that acts as a mycotoxin. The first step of the pathway is the synthesis of 3,5-dimethylorsellinic acid (DMOA) by the polyketide synthase trt4. DMOA is then prenylated into farnesyl-DMOA by the polyprenyl transferase trt2. Methylation by the methyltransferase trt5 then leads to farnesyl-DMOA methyl ester which is further subject to epoxidation by the FAD-dependent monooxygenase trt8 to yield epoxyfarnesyl-DMOA methyl ester. Cyclization of epoxyfarnesyl-DMOA methyl ester by the terpene cyclase trt1 leads to a tetracycle intermediate which is in turn converted to preterretonin. Dehydrogenase trt9 comes next to transform preterretonin to preterrenoid. The FAD-dependent monooxygenase trt3 is then required for the C-hydroxylation at C16 of preterrenoid to yield terrenoid. The cytochrome P450 trt6 catalyzes three successive oxidations to transform terrenoid into an unstable intermediate, which then undergoes the D-ring expansion and unusual rearrangement of the methoxy group to afford the core skeleton of terretonin. Trt14 catalyzes the D-ring expansion of terretonin involving intramolecular methoxy rearrangement as well as the hydrolysis of the expanded D-ring and the methyl ester moiety. Finally, the nonheme iron-dependent dioxygenase trt7 accomplishes the last two oxidation reactions steps to complete the biosynthesis of terretonin. Terretonin C is produced via spontaneous decarboxylation of the terretonin precursor. Another shunt product of the terretonin biosynthesis is dihydrofarnesyl-DMOA, derived from epoxyfarnesyl-DMOA through hydrolysis of the epoxide. The polypeptide is Cytochrome P450 monooxygenase trt6 (Aspergillus terreus (strain NIH 2624 / FGSC A1156)).